We begin with the raw amino-acid sequence, 213 residues long: Thiamine-phosphate synthase (213 aa).

4-amino-2-methyl-5-(diphosphooxymethyl)pyrimidine-binding positions include 38-42 (QLRIK) and Asn-70. Asp-71 and Asp-90 together coordinate Mg(2+). Ser-109 is a binding site for 4-amino-2-methyl-5-(diphosphooxymethyl)pyrimidine. 135–137 (TQT) contacts 2-[(2R,5Z)-2-carboxy-4-methylthiazol-5(2H)-ylidene]ethyl phosphate. Lys-138 serves as a coordination point for 4-amino-2-methyl-5-(diphosphooxymethyl)pyrimidine. 2-[(2R,5Z)-2-carboxy-4-methylthiazol-5(2H)-ylidene]ethyl phosphate-binding positions include Gly-168 and 188–189 (VS).

This sequence belongs to the thiamine-phosphate synthase family. The cofactor is Mg(2+).

The enzyme catalyses 2-[(2R,5Z)-2-carboxy-4-methylthiazol-5(2H)-ylidene]ethyl phosphate + 4-amino-2-methyl-5-(diphosphooxymethyl)pyrimidine + 2 H(+) = thiamine phosphate + CO2 + diphosphate. The catalysed reaction is 2-(2-carboxy-4-methylthiazol-5-yl)ethyl phosphate + 4-amino-2-methyl-5-(diphosphooxymethyl)pyrimidine + 2 H(+) = thiamine phosphate + CO2 + diphosphate. It catalyses the reaction 4-methyl-5-(2-phosphooxyethyl)-thiazole + 4-amino-2-methyl-5-(diphosphooxymethyl)pyrimidine + H(+) = thiamine phosphate + diphosphate. It functions in the pathway cofactor biosynthesis; thiamine diphosphate biosynthesis; thiamine phosphate from 4-amino-2-methyl-5-diphosphomethylpyrimidine and 4-methyl-5-(2-phosphoethyl)-thiazole: step 1/1. Functionally, condenses 4-methyl-5-(beta-hydroxyethyl)thiazole monophosphate (THZ-P) and 2-methyl-4-amino-5-hydroxymethyl pyrimidine pyrophosphate (HMP-PP) to form thiamine monophosphate (TMP). The chain is Thiamine-phosphate synthase from Pectobacterium atrosepticum (strain SCRI 1043 / ATCC BAA-672) (Erwinia carotovora subsp. atroseptica).